The primary structure comprises 640 residues: Threonine--tRNA ligase (640 aa).

The 61-residue stretch at 1–61 (MPIITLPDGN…EKDSEVNIIT (61 aa)) folds into the TGS domain. Residues 242–533 (DHRRIAKQMS…LIEHYAGRMP (292 aa)) are catalytic. The Zn(2+) site is built by Cys333, His384, and His510.

This sequence belongs to the class-II aminoacyl-tRNA synthetase family. Homodimer. Requires Zn(2+) as cofactor.

The protein localises to the cytoplasm. It carries out the reaction tRNA(Thr) + L-threonine + ATP = L-threonyl-tRNA(Thr) + AMP + diphosphate + H(+). Catalyzes the attachment of threonine to tRNA(Thr) in a two-step reaction: L-threonine is first activated by ATP to form Thr-AMP and then transferred to the acceptor end of tRNA(Thr). Also edits incorrectly charged L-seryl-tRNA(Thr). The chain is Threonine--tRNA ligase from Prochlorococcus marinus (strain MIT 9303).